Reading from the N-terminus, the 193-residue chain is Nucleoside triphosphate pyrophosphatase (193 aa).

Aspartate 70 functions as the Proton acceptor in the catalytic mechanism.

Belongs to the Maf family. Requires a divalent metal cation as cofactor.

Its subcellular location is the cytoplasm. It catalyses the reaction a ribonucleoside 5'-triphosphate + H2O = a ribonucleoside 5'-phosphate + diphosphate + H(+). The catalysed reaction is a 2'-deoxyribonucleoside 5'-triphosphate + H2O = a 2'-deoxyribonucleoside 5'-phosphate + diphosphate + H(+). Its function is as follows. Nucleoside triphosphate pyrophosphatase. May have a dual role in cell division arrest and in preventing the incorporation of modified nucleotides into cellular nucleic acids. The protein is Nucleoside triphosphate pyrophosphatase of Anaplasma phagocytophilum (strain HZ).